Here is a 537-residue protein sequence, read N- to C-terminus: O-phosphoserine--tRNA(Cys) ligase (537 aa).

Residues 186-188, 231-233, 273-274, and Asn317 each bind substrate; these read HMT, SAS, and YY.

This sequence belongs to the class-II aminoacyl-tRNA synthetase family. O-phosphoseryl-tRNA(Cys) synthetase subfamily. Homotetramer. Interacts with SepCysS.

It carries out the reaction tRNA(Cys) + O-phospho-L-serine + ATP = O-phospho-L-seryl-tRNA(Cys) + AMP + diphosphate. In terms of biological role, catalyzes the attachment of O-phosphoserine (Sep) to tRNA(Cys). This is O-phosphoserine--tRNA(Cys) ligase from Methanococcus maripaludis (strain C5 / ATCC BAA-1333).